Reading from the N-terminus, the 683-residue chain is Hexamerin 70b (683 aa).

Residues 1-21 (MIVIMKAGFLFLASLCLLVQA) form the signal peptide. The Hemocyanin N-terminal domain occupies 32 to 153 (VTRQKNIYEL…VAVIHRPDTK (122 aa)). The Hemocyanin middle domain maps to 159-428 (PMYEVMPHLY…SIYKTILDYY (270 aa)). The N-linked (GlcNAc...) asparagine glycan is linked to N203. Positions 437 to 673 (KYTTEELNFP…IHVKEVLVHH (237 aa)) constitute a Hemocyanin C-terminal domain.

It belongs to the hemocyanin/hexamerin family. As to quaternary structure, probable homohexamer. Expressed in the fat body and secreted into the hemolymph (at protein level). Present in trophocytes and oenocytes of the fat body (at protein level).

It is found in the secreted. The protein resides in the nucleus. It localises to the cytoplasm. The protein localises to the cytoplasmic granule. In terms of biological role, storage protein that may function as a nutrient supply to compensate for lack of dietary proteins during metamorphosis and egg production. The chain is Hexamerin 70b from Apis mellifera (Honeybee).